The sequence spans 533 residues: Beta-1,4 N-acetylgalactosaminyltransferase 1 (533 aa).

The Cytoplasmic portion of the chain corresponds to 1 to 7 (MRLDRRA). A helical; Signal-anchor for type II membrane protein transmembrane segment spans residues 8–25 (LYALVLLLACASLGLLYA). Topologically, residues 26 to 533 (STRDAPGLPN…KHRLQCMTAE (508 aa)) are lumenal. Asn-79 and Asn-274 each carry an N-linked (GlcNAc...) asparagine glycan. Cys-429 and Cys-476 are joined by a disulfide.

This sequence belongs to the glycosyltransferase 2 family. As to quaternary structure, homodimer; disulfide-linked. As to expression, strongly expressed in brain, testis, spleen, and to a lesser extent in liver.

It is found in the golgi apparatus membrane. The catalysed reaction is a ganglioside GM3 (d18:1(4E)) + UDP-N-acetyl-alpha-D-galactosamine = a ganglioside GM2 (d18:1(4E)) + UDP + H(+). The enzyme catalyses a ganglioside GD3 (d18:1(4E)) + UDP-N-acetyl-alpha-D-galactosamine = a ganglioside GD2 (d18:1(4E)) + UDP + H(+). It catalyses the reaction a ganglioside GM3 + UDP-N-acetyl-alpha-D-galactosamine = a ganglioside GM2 + UDP + H(+). It carries out the reaction a ganglioside GD3 + UDP-N-acetyl-alpha-D-galactosamine = a ganglioside GD2 + UDP + H(+). The catalysed reaction is a ganglioside GD1a + UDP-N-acetyl-alpha-D-galactosamine = a ganglioside GalNAc-GD1a + UDP + H(+). The enzyme catalyses a ganglioside GT3 (d18:1(4E)) + UDP-N-acetyl-alpha-D-galactosamine = a ganglioside GT2 (d18:1(4E)) + UDP + H(+). It catalyses the reaction a beta-D-Gal-(1-&gt;4)-beta-D-Glc-(1&lt;-&gt;1)-Cer(d18:1(4E)) + UDP-N-acetyl-alpha-D-galactosamine = a ganglioside GA2 (d18:1(4E)) + UDP + H(+). It carries out the reaction a neolactoside IV(3)-alpha-NeuGc-nLc4Cer + UDP-N-acetyl-alpha-D-galactosamine = a neolactoside IV(4)-beta-GalNAc-IV(3)-alpha-NeuGc-nLc4Cer + UDP + H(+). It participates in sphingolipid metabolism. Involved in the biosynthesis of gangliosides GM2, GD2, GT2 and GA2 from GM3, GD3, GT3 and GA3, respectively. The protein is Beta-1,4 N-acetylgalactosaminyltransferase 1 of Rattus norvegicus (Rat).